We begin with the raw amino-acid sequence, 355 residues long: Protein RecA (355 aa).

Position 72 to 79 (Gly-72 to Thr-79) interacts with ATP.

Belongs to the RecA family.

It localises to the cytoplasm. In terms of biological role, can catalyze the hydrolysis of ATP in the presence of single-stranded DNA, the ATP-dependent uptake of single-stranded DNA by duplex DNA, and the ATP-dependent hybridization of homologous single-stranded DNAs. It interacts with LexA causing its activation and leading to its autocatalytic cleavage. The protein is Protein RecA of Wolbachia sp. subsp. Drosophila simulans (strain wRi).